A 258-amino-acid polypeptide reads, in one-letter code: Imidazole glycerol phosphate synthase subunit HisF (258 aa).

Residues Asp11 and Asp130 contribute to the active site.

This sequence belongs to the HisA/HisF family. In terms of assembly, heterodimer of HisH and HisF.

It localises to the cytoplasm. The catalysed reaction is 5-[(5-phospho-1-deoxy-D-ribulos-1-ylimino)methylamino]-1-(5-phospho-beta-D-ribosyl)imidazole-4-carboxamide + L-glutamine = D-erythro-1-(imidazol-4-yl)glycerol 3-phosphate + 5-amino-1-(5-phospho-beta-D-ribosyl)imidazole-4-carboxamide + L-glutamate + H(+). The protein operates within amino-acid biosynthesis; L-histidine biosynthesis; L-histidine from 5-phospho-alpha-D-ribose 1-diphosphate: step 5/9. IGPS catalyzes the conversion of PRFAR and glutamine to IGP, AICAR and glutamate. The HisF subunit catalyzes the cyclization activity that produces IGP and AICAR from PRFAR using the ammonia provided by the HisH subunit. This chain is Imidazole glycerol phosphate synthase subunit HisF, found in Enterobacter sp. (strain 638).